A 102-amino-acid chain; its full sequence is MAKAGNIERVVERADTELMPPSMYKVILNNDDYTPMDFVVEVLQLFFKMNEHQATEIMLQIHHQGKAVCGVFPFGIAETKVAQVNQFARQNQHPLLCSLEKA.

It belongs to the ClpS family. In terms of assembly, binds to the N-terminal domain of the chaperone ClpA.

Functionally, involved in the modulation of the specificity of the ClpAP-mediated ATP-dependent protein degradation. This chain is ATP-dependent Clp protease adapter protein ClpS, found in Shewanella amazonensis (strain ATCC BAA-1098 / SB2B).